We begin with the raw amino-acid sequence, 152 residues long: MINHNIISFKKFEAIFEQRPGGLELNMPIEIGSNNVDLTSKPFNIKGGSHYKVKIGYMASEPITDLICQIHTFRKSTPYGRDTQKVGDICANTNDLEFDFPKFGWEQASTQSSSMGDYTIKMYFKGNGNQDLATFFYSFNVAPDWENALPIN.

It belongs to the Rho GDI family.

The protein localises to the cytoplasm. In terms of biological role, regulates the GDP/GTP exchange reaction of the Rho proteins by inhibiting the dissociation of GDP from them, and the subsequent binding of GTP to them. The polypeptide is Putative rho GDP-dissociation inhibitor 2 (rdiB) (Dictyostelium discoideum (Social amoeba)).